We begin with the raw amino-acid sequence, 77 residues long: Sec-independent protein translocase protein TatA (77 aa).

Residues 1-21 (MGGLSIWHWLIVLLIVALVFG) form a helical membrane-spanning segment. A disordered region spans residues 40-77 (KDGMREGEAPADPQQLPRSGSVNVDAKDATRSSDSNKA). Residues 64–77 (DAKDATRSSDSNKA) are compositionally biased toward basic and acidic residues.

It belongs to the TatA/E family. The Tat system comprises two distinct complexes: a TatABC complex, containing multiple copies of TatA, TatB and TatC subunits, and a separate TatA complex, containing only TatA subunits. Substrates initially bind to the TatABC complex, which probably triggers association of the separate TatA complex to form the active translocon.

The protein resides in the cell inner membrane. In terms of biological role, part of the twin-arginine translocation (Tat) system that transports large folded proteins containing a characteristic twin-arginine motif in their signal peptide across membranes. TatA could form the protein-conducting channel of the Tat system. This chain is Sec-independent protein translocase protein TatA, found in Burkholderia thailandensis (strain ATCC 700388 / DSM 13276 / CCUG 48851 / CIP 106301 / E264).